The sequence spans 1188 residues: MAGHEVRYGKHRTRRSFSRINEVLDLPNLIEIQTDSFQDFLDTGLREVFEDVLPISNFTDTMELEFVGYEFKEPKYTLEEARIHDASYSAPIFVTFRLVNKETGEIKTQEVFFGDFPIMTEMGTFIINGGERIIVSQLVRSPGVYFNDKVDKNGKVGYGSTVIPNRGAWLELETDAKDIAYTRIDRTRKIPFTTLVRALGFSGDDEILDIFGDSELVRNTIEKDIHKNPSDSRTDEALKEIYERLRPGEPKTADSSRSLLIARFFDARRYDLAAVGRYKINKKLNVKTRLLNQIIAENLVDSETGEILVEAGTEMTRDVIESIEAHIDGDLNKFVYTPNDYAVVTEPVVLQKFKVQSPLDPDKVVTIVGNATPDDKVRALTPADILAEMSYFLNLSEGIGKVDDIDHLGNRRIRAVGELLANQFRIGLARMERNVRERMSVQDNDVLTPQQIINIRPVTAAVKEFFGSSQLSQFMDQHNPLSELSHKRRLSALGPGGLTRDRAGYEVRDVHYTHYGRMCPIETPEGPNIGLINNLSSFGHLNKYGFIQTPYRKVDRATGVVTNEIVWLTADEEDEFTVAQANSKLNEDGTFAEEIVMGRHQGNNQEFAASTVDFVDVSPKQVVAVATACIPFLENDDSNRALMGANMQRQAVPLIDPKAPFVGTGMEYQAAHDSGAAVIAQHDGKVVFSDAEKVEVRREDGSLDVYHVTKFRRSNSGTAYNQRTLVKVGDIVEKGDFIADGPSMEKGEMALGQNPVVAYMTWEGYNFEDAVIMSERLVKEDVYTSVHLEEFESETRDTKLGPEEITREVPNVGEEALRDLDEMGIIRIGAEVKEGDILVGKVTPKGEKDLSAEERLLHAIFGDKSREVRDTSLRVPHGGDGIVRDVKIFTRANGDELQSGVNMLVRVYIAQKRKIKVGDKMAGRHGNKGVVSRIVPVEDMPYLPDGTPVDIMLNPLGVPSRMNIGQVMELHLGMAARNLGIHIATPVFDGATAEDLWDTVAEAGMDSDAKTILYDGRTGEPFDNRVSVGVMYMIKLHHMVDDKLHARSVGPYSLVTQQPLGGKAQFGGQRFGEMEVWALEAYGASNVLQEILTYKSDDVTGRLKAYEAITKGKPIPKPGVPESFRVLVKELQSLGLDMRVLDEDDNEVELRDLDEGEDDDVMHVDDLEKAREKQAQETPEVSENSEEK.

The disordered stretch occupies residues glutamate 1149–lysine 1188. Over residues valine 1161 to alanine 1175 the composition is skewed to basic and acidic residues.

The protein belongs to the RNA polymerase beta chain family. As to quaternary structure, the RNAP catalytic core consists of 2 alpha, 1 beta, 1 beta' and 1 omega subunit. When a sigma factor is associated with the core the holoenzyme is formed, which can initiate transcription.

The enzyme catalyses RNA(n) + a ribonucleoside 5'-triphosphate = RNA(n+1) + diphosphate. Functionally, DNA-dependent RNA polymerase catalyzes the transcription of DNA into RNA using the four ribonucleoside triphosphates as substrates. This Streptococcus uberis (strain ATCC BAA-854 / 0140J) protein is DNA-directed RNA polymerase subunit beta.